A 992-amino-acid polypeptide reads, in one-letter code: Ribosome quality control complex subunit NEMF homolog (992 aa).

The segment covering 214–231 (KETTEETPEAEDKPEKGG) has biased composition (basic and acidic residues). Residues 214–245 (KETTEETPEAEDKPEKGGKKQRKKQQNTKLEQ) are disordered. Coiled-coil stretches lie at residues 331-370 (STQE…LTKV) and 481-514 (SAAQ…VRTI). Disordered regions lie at residues 688-715 (EVEH…NTEI) and 771-895 (GPSR…GDVD). Positions 702–715 (SNINLSEPSSNTEI) are enriched in polar residues. The stretch at 774–839 (RKKQVSAKKT…QDDEEREIRM (66 aa)) forms a coiled coil. Residues 782-796 (KTKEDKARAKQEAAK) show a composition bias toward basic and acidic residues. The span at 814-825 (RGQKGKLKKMKQ) shows a compositional bias: basic residues. Over residues 845–874 (SGKEKPQASADKVVEKSESTKEYVKPEKSA) the composition is skewed to basic and acidic residues.

This sequence belongs to the NEMF family. As to quaternary structure, component of the ribosome quality control complex (RQC), composed of at least the E3 ubiquitin ligase l(3)76BDr/LTN1 and Clbn/NEMF associated with the 60S ribosomal subunit. The complex probably also contains TCF25 as well as TER94/VCP and its ubiquitin-binding cofactors. Interacts (via its C-terminus) with pros (via its homeobox). Interacts (via its N-terminus) with emb. In terms of tissue distribution, expressed in enterocytes (at protein level).

The protein resides in the nucleus. It localises to the cytoplasm. It is found in the mitochondrion outer membrane. Key component of the ribosome quality control complex (RQC), a ribosome-associated complex that mediates the extraction of incompletely synthesized nascent chains from stalled ribosomes as well as their ubiquitin-mediated proteasomal degradation. Thereby, frees 60S subunit ribosomes from the stalled translation complex and prevents the accumulation of nascent polypeptide chains that are potentially toxic for the cell. Within the RQC complex, Clbn/NEMF specifically binds stalled 60S ribosomal subunits by recognizing an exposed, nascent chain-conjugated tRNA moiety. Following binding to stalled 60S ribosomal subunits, Clbn/NEMF mediates CAT tailing by recruiting alanine-charged tRNA to the A-site and directing the elongation of stalled nascent chains independently of mRNA or 40S subunits, leading to non-templated C-terminal alanine extensions (CAT tails). On mitochondrial surface, plays a role in mitochondrial-stress induced translational termination impairment and protein carboxyl terminal extension (MISTERMINATE). Plays a role in regulating nuclear transport possibly through directly binding to both emb and cargo proteins. Plays a role in the regulation of G1-to-S cell cycle transition. Regulates S phase checkpoint by antagonizing E2F1 activity. Together with hid and tefu/ATM, plays a role in DNA damage-induced apoptosis through both p53-dependent and -independent activity. Plays an essential role in the regulation of mitochondrial structure and redox state in enterocytes which is essential for the control of intestinal stem cells proliferation and intestinal homeostasis. This chain is Ribosome quality control complex subunit NEMF homolog, found in Drosophila melanogaster (Fruit fly).